Here is a 101-residue protein sequence, read N- to C-terminus: Ascorbate-specific PTS system EIIB component (101 aa).

Residues 3 to 96 (VRILAVCGNG…KLLEVIKEHF (94 aa)) enclose the PTS EIIB type-2 domain. Catalysis depends on Cys-9, which acts as the Phosphocysteine intermediate. Position 9 is a phosphocysteine (Cys-9).

It is found in the cytoplasm. The catalysed reaction is N(pros)-phospho-L-histidyl-[protein] + L-ascorbate(out) = L-ascorbate 6-phosphate(in) + L-histidyl-[protein]. Its function is as follows. The phosphoenolpyruvate-dependent sugar phosphotransferase system (sugar PTS), a major carbohydrate active transport system, catalyzes the phosphorylation of incoming sugar substrates concomitantly with their translocation across the cell membrane. The enzyme II UlaABC PTS system is involved in ascorbate transport. This is Ascorbate-specific PTS system EIIB component (ulaB) from Salmonella choleraesuis (strain SC-B67).